A 286-amino-acid polypeptide reads, in one-letter code: 2-dehydro-3-deoxyphosphooctonate aldolase (286 aa).

Belongs to the KdsA family.

It localises to the cytoplasm. The catalysed reaction is D-arabinose 5-phosphate + phosphoenolpyruvate + H2O = 3-deoxy-alpha-D-manno-2-octulosonate-8-phosphate + phosphate. It functions in the pathway carbohydrate biosynthesis; 3-deoxy-D-manno-octulosonate biosynthesis; 3-deoxy-D-manno-octulosonate from D-ribulose 5-phosphate: step 2/3. The protein operates within bacterial outer membrane biogenesis; lipopolysaccharide biosynthesis. The sequence is that of 2-dehydro-3-deoxyphosphooctonate aldolase from Haemophilus ducreyi (strain 35000HP / ATCC 700724).